The primary structure comprises 245 residues: Biosynthetic peptidoglycan transglycosylase (245 aa).

Residues 20–42 (VYAGSVFAGAWLATQLFYLAQIA) traverse the membrane as a helical segment.

It belongs to the glycosyltransferase 51 family.

It is found in the cell inner membrane. The catalysed reaction is [GlcNAc-(1-&gt;4)-Mur2Ac(oyl-L-Ala-gamma-D-Glu-L-Lys-D-Ala-D-Ala)](n)-di-trans,octa-cis-undecaprenyl diphosphate + beta-D-GlcNAc-(1-&gt;4)-Mur2Ac(oyl-L-Ala-gamma-D-Glu-L-Lys-D-Ala-D-Ala)-di-trans,octa-cis-undecaprenyl diphosphate = [GlcNAc-(1-&gt;4)-Mur2Ac(oyl-L-Ala-gamma-D-Glu-L-Lys-D-Ala-D-Ala)](n+1)-di-trans,octa-cis-undecaprenyl diphosphate + di-trans,octa-cis-undecaprenyl diphosphate + H(+). Its pathway is cell wall biogenesis; peptidoglycan biosynthesis. In terms of biological role, peptidoglycan polymerase that catalyzes glycan chain elongation from lipid-linked precursors. In Burkholderia lata (strain ATCC 17760 / DSM 23089 / LMG 22485 / NCIMB 9086 / R18194 / 383), this protein is Biosynthetic peptidoglycan transglycosylase.